A 701-amino-acid polypeptide reads, in one-letter code: Transcriptional regulator Kaiso (701 aa).

Residues Cys-32–Arg-94 enclose the BTB domain. 2 disordered regions span residues Gly-128 to Pro-158 and Ser-181 to His-311. The span at Thr-245 to Pro-258 shows a compositional bias: polar residues. A compositionally biased stretch (low complexity) spans Thr-259–Lys-273. The segment covering Val-278 to His-311 has biased composition (polar residues). The segment at Ala-470–Asn-609 is required for methylation dependent DNA-binding. 3 C2H2-type zinc fingers span residues Tyr-501–His-523, Tyr-529–His-551, and Tyr-557–His-580. Positions His-519–Tyr-701 are required for sequence specific DNA-binding. The interval Asp-644–Thr-664 is disordered. A compositionally biased stretch (polar residues) spans Gln-652–Thr-664.

As to quaternary structure, self associates. Interacts with tcf7l1-A, leading to repression of tcf7l1-A target genes. Interacts with ctnnd1, and this interaction may inhibit DNA-binding. Interacts with ncor1.

The protein localises to the nucleus. Functionally, transcriptional regulator with bimodal DNA-binding specificity. Binds to methylated CpG dinucleotides in the consensus sequence 5'-CGCG-3' and also binds to the non-methylated consensus sequence 5'-CTGCNA-3'. May recruit the N-CoR repressor complex to promote histone deacetylation and the formation of repressive chromatin structures in target gene promoters. Contributes to the repression of target genes of the Wnt signaling pathway and to the methylation-dependent repression of zygotic transcription prior to the mid-blastula transition (MBT). Also required for gastrulation movements. The protein is Transcriptional regulator Kaiso (zbtb33) of Xenopus laevis (African clawed frog).